The primary structure comprises 256 residues: Triosephosphate isomerase (256 aa).

9–11 (NWK) is a binding site for substrate. Residue H97 is the Electrophile of the active site. The active-site Proton acceptor is the E169. Substrate is bound by residues G175, S214, and 235 to 236 (GG).

Belongs to the triosephosphate isomerase family. In terms of assembly, homodimer.

Its subcellular location is the cytoplasm. It carries out the reaction D-glyceraldehyde 3-phosphate = dihydroxyacetone phosphate. It participates in carbohydrate biosynthesis; gluconeogenesis. It functions in the pathway carbohydrate degradation; glycolysis; D-glyceraldehyde 3-phosphate from glycerone phosphate: step 1/1. Involved in the gluconeogenesis. Catalyzes stereospecifically the conversion of dihydroxyacetone phosphate (DHAP) to D-glyceraldehyde-3-phosphate (G3P). This is Triosephosphate isomerase from Vibrio parahaemolyticus serotype O3:K6 (strain RIMD 2210633).